We begin with the raw amino-acid sequence, 225 residues long: Cytidylate kinase (225 aa).

11–19 (GPAAAGKST) serves as a coordination point for ATP.

This sequence belongs to the cytidylate kinase family. Type 1 subfamily.

It localises to the cytoplasm. The enzyme catalyses CMP + ATP = CDP + ADP. It carries out the reaction dCMP + ATP = dCDP + ADP. This is Cytidylate kinase from Anoxybacillus flavithermus (strain DSM 21510 / WK1).